Reading from the N-terminus, the 2290-residue chain is Autophagy-related protein 2 (2290 aa).

A Chorein N-terminal domain is found at 10-99 (WCKVMLQRYM…MCIEDLQLTF (90 aa)). A required for epg-6 binding region spans residues 829-1549 (DSMMKSVSAD…PNRDHSAFVV (721 aa)). Disordered stretches follow at residues 1678–1727 (IGSK…LGDL), 1805–1851 (DDLF…DLTG), 1898–1919 (SETE…PARN), and 1967–2003 (EHGN…ERNK). A compositionally biased stretch (low complexity) spans 1681–1692 (KKTTPKTSVSSS). The span at 1714 to 1723 (RPSPVQPPTP) shows a compositional bias: pro residues. Over residues 1810–1830 (QSYSSSSSETESESSAPQSSQ) the composition is skewed to low complexity. Residues 1972–2011 (LDSIDNEDDNEKQKIEEEMEEDEKEEEEERNKEIQEAVER) are a coiled coil. A compositionally biased stretch (acidic residues) spans 1988–1999 (EEMEEDEKEEEE).

It belongs to the ATG2 family. As to quaternary structure, interacts with epg-6; the interaction is direct.

Its subcellular location is the preautophagosomal structure membrane. It is found in the lipid droplet. The protein resides in the endoplasmic reticulum membrane. The protein localises to the cytoplasm. The enzyme catalyses a 1,2-diacyl-sn-glycero-3-phospho-L-serine(in) = a 1,2-diacyl-sn-glycero-3-phospho-L-serine(out). The catalysed reaction is a 1,2-diacyl-sn-glycero-3-phosphoethanolamine(in) = a 1,2-diacyl-sn-glycero-3-phosphoethanolamine(out). Functionally, lipid transfer protein involved in autophagosome assembly and in the distribution of atg-9 and atg-13 during the autophagy-mediated degradation of protein aggregates. Tethers the edge of the isolation membrane (IM) to the endoplasmic reticulum (ER) and mediates direct lipid transfer from ER to IM for IM expansion. Binds to the ER exit site (ERES), which is the membrane source for autophagosome formation, and extracts phospholipids from the membrane source to the IM for membrane expansion. Involved in autophagy-mediated degradation of ribosomal RNA and ribosomal proteins in lysosomes, which is essential for maintaining nucleotide homeostasis. This Caenorhabditis elegans protein is Autophagy-related protein 2.